Here is a 363-residue protein sequence, read N- to C-terminus: Histidinol-phosphate aminotransferase (363 aa).

Residue Lys-220 is modified to N6-(pyridoxal phosphate)lysine.

This sequence belongs to the class-II pyridoxal-phosphate-dependent aminotransferase family. Histidinol-phosphate aminotransferase subfamily. As to quaternary structure, homodimer. The cofactor is pyridoxal 5'-phosphate.

The enzyme catalyses L-histidinol phosphate + 2-oxoglutarate = 3-(imidazol-4-yl)-2-oxopropyl phosphate + L-glutamate. The protein operates within amino-acid biosynthesis; L-histidine biosynthesis; L-histidine from 5-phospho-alpha-D-ribose 1-diphosphate: step 7/9. The polypeptide is Histidinol-phosphate aminotransferase (Chlorobium chlorochromatii (strain CaD3)).